The primary structure comprises 249 residues: MKSNSNGKVALIVNADDAVGEAVALRLAGSGVQLALAGADAGRLDKLASQLAGKGATVMAVATAAVEAGAIRDSVAQVKARYGRIDVLVHNESALAANLPEISDADVGAALDTGLAAPFHYLRAVVPGMREAGFGRVVNISDLRYLGLANTSSVAAARSGLFGLTRALALESARDGVTVNTVVMGDVDSETTPAAEREKLAGGIPVKRLGTPADIANAVGFLAADSSKYVTGQTLFVCGGKSAYFSMSI.

This sequence belongs to the short-chain dehydrogenases/reductases (SDR) family. In terms of assembly, heterotetramer composed of 2 inactive BbsC subunits and 2 active BbsD subunits.

The protein operates within xenobiotic degradation; toluene degradation. Functionally, involved in an anaerobic toluene degradation pathway. Catalytically inactive subunit, which is probably required for the structural and/or regulatory integrity of the catalytic subunit BbsD. This subunit cannot bind NAD(+) or substrate. The protein is (2S)-[(R)-hydroxy(phenyl)methyl]succinyl-CoA dehydrogenase subunit BbsC of Thauera aromatica.